A 937-amino-acid polypeptide reads, in one-letter code: Protocadherin alpha-7 (937 aa).

An N-terminal signal peptide occupies residues 1–29 (MVCPNGYDPGGRHLLLFIIILAAWEAGRG). 6 Cadherin domains span residues 30–133 (QLHY…PPVF), 134–242 (PATQ…APVF), 243–350 (DRTL…APQL), 351–455 (TLTS…APAF), 456–565 (AQPE…APAL), and 581–678 (VPRS…APKA). Over 30-697 (QLHYSVPEEA…GPETELVDVN (668 aa)) the chain is Extracellular. A disulfide bridge links Cys96 with Cys102. N-linked (GlcNAc...) asparagine glycans are attached at residues Asn254 and Asn265. Residue Asn548 is glycosylated (N-linked (GlcNAc...) asparagine). Residues 698 to 718 (VYLIIAICAVSSLLVLTLLLY) form a helical membrane-spanning segment. Residues 719–937 (TALRCSAPSS…GNSTTDNSDQ (219 aa)) lie on the Cytoplasmic side of the membrane. Disordered regions lie at residues 756–795 (QRVC…DWRY) and 817–843 (AGPG…EVSP). 5 PXXP repeats span residues 774–777 (PSLP), 786–789 (PRQP), 819–822 (PGGP), 860–863 (PGNP), and 878–881 (PGSP). The segment at 774–881 (PSLPQGPSST…PDKFIIPGSP (108 aa)) is 5 X 4 AA repeats of P-X-X-P. A compositionally biased stretch (polar residues) spans 775 to 787 (SLPQGPSSTDNPR). Residues 888-937 (QEPANSQIDKSDFITFGKKEETKKKKKKKKGNKTQEKKEKGNSTTDNSDQ) are disordered. Positions 896–910 (DKSDFITFGKKEETK) are enriched in basic and acidic residues.

Forms homodimers in trans (molecules expressed by two different cells). Forms promiscuous heterodimers in cis (at the plasma membrane of the same cell) with other protocadherins.

Its subcellular location is the cell membrane. In terms of biological role, calcium-dependent cell-adhesion protein involved in cells self-recognition and non-self discrimination. Thereby, it is involved in the establishment and maintenance of specific neuronal connections in the brain. This is Protocadherin alpha-7 from Pan troglodytes (Chimpanzee).